Consider the following 254-residue polypeptide: Ribosomal protein L11 methyltransferase (254 aa).

5 residues coordinate S-adenosyl-L-methionine: Thr107, Gly128, Asp149, Ser175, and Asn191.

The protein belongs to the methyltransferase superfamily. PrmA family.

It is found in the cytoplasm. The enzyme catalyses L-lysyl-[protein] + 3 S-adenosyl-L-methionine = N(6),N(6),N(6)-trimethyl-L-lysyl-[protein] + 3 S-adenosyl-L-homocysteine + 3 H(+). It catalyses the reaction an N-terminal L-alpha-aminoacyl-[protein] + 3 S-adenosyl-L-methionine = an N-terminal trimethyl-L-alpha-aminoacyl-[protein] + 3 S-adenosyl-L-homocysteine + 3 H(+). In terms of biological role, methylates ribosomal protein L11. Preferentially recognizes free L11 before its incorporation into 50S subunits. This function is dispensable for growth and thermostability. This Thermus thermophilus (strain ATCC 27634 / DSM 579 / HB8) protein is Ribosomal protein L11 methyltransferase.